The primary structure comprises 203 residues: dITP/XTP pyrophosphatase (203 aa).

7 to 12 (SGNLHK) serves as a coordination point for substrate. The Mg(2+) site is built by Glu47 and Asp77. The active-site Proton acceptor is Asp77. Residues Ser78, 160–163 (FGYD), Lys183, and 188–189 (HR) each bind substrate.

This sequence belongs to the HAM1 NTPase family. Homodimer. It depends on Mg(2+) as a cofactor.

It catalyses the reaction XTP + H2O = XMP + diphosphate + H(+). It carries out the reaction dITP + H2O = dIMP + diphosphate + H(+). The enzyme catalyses ITP + H2O = IMP + diphosphate + H(+). Pyrophosphatase that catalyzes the hydrolysis of nucleoside triphosphates to their monophosphate derivatives, with a high preference for the non-canonical purine nucleotides XTP (xanthosine triphosphate), dITP (deoxyinosine triphosphate) and ITP. Seems to function as a house-cleaning enzyme that removes non-canonical purine nucleotides from the nucleotide pool, thus preventing their incorporation into DNA/RNA and avoiding chromosomal lesions. The polypeptide is dITP/XTP pyrophosphatase (Opitutus terrae (strain DSM 11246 / JCM 15787 / PB90-1)).